Here is a 417-residue protein sequence, read N- to C-terminus: Serine hydroxymethyltransferase (417 aa).

At Lys-54 the chain carries N6-acetyllysine. (6S)-5,6,7,8-tetrahydrofolate contacts are provided by residues Leu-121 and 125–127 (GHL). Residue Lys-229 is modified to N6-(pyridoxal phosphate)lysine. Lys-250, Lys-285, and Lys-354 each carry N6-acetyllysine. Position 355 to 357 (355 to 357 (SPF)) interacts with (6S)-5,6,7,8-tetrahydrofolate. Lys-375 bears the N6-acetyllysine mark.

The protein belongs to the SHMT family. Homodimer. It depends on pyridoxal 5'-phosphate as a cofactor.

It is found in the cytoplasm. It carries out the reaction (6R)-5,10-methylene-5,6,7,8-tetrahydrofolate + glycine + H2O = (6S)-5,6,7,8-tetrahydrofolate + L-serine. Its pathway is one-carbon metabolism; tetrahydrofolate interconversion. It functions in the pathway amino-acid biosynthesis; glycine biosynthesis; glycine from L-serine: step 1/1. In terms of biological role, catalyzes the reversible interconversion of serine and glycine with tetrahydrofolate (THF) serving as the one-carbon carrier. This reaction serves as the major source of one-carbon groups required for the biosynthesis of purines, thymidylate, methionine, and other important biomolecules. Also exhibits THF-independent aldolase activity toward beta-hydroxyamino acids, producing glycine and aldehydes, via a retro-aldol mechanism. This Escherichia coli O1:K1 / APEC protein is Serine hydroxymethyltransferase.